Consider the following 480-residue polypeptide: Glycogen synthase (480 aa).

Residue K15 coordinates ADP-alpha-D-glucose.

This sequence belongs to the glycosyltransferase 1 family. Bacterial/plant glycogen synthase subfamily.

It catalyses the reaction [(1-&gt;4)-alpha-D-glucosyl](n) + ADP-alpha-D-glucose = [(1-&gt;4)-alpha-D-glucosyl](n+1) + ADP + H(+). It participates in glycan biosynthesis; glycogen biosynthesis. Synthesizes alpha-1,4-glucan chains using ADP-glucose. The chain is Glycogen synthase from Clostridioides difficile (strain 630) (Peptoclostridium difficile).